Here is an 857-residue protein sequence, read N- to C-terminus: DNA gyrase subunit A (857 aa).

The Topo IIA-type catalytic domain maps to leucine 39–leucine 507. Tyrosine 127 acts as the O-(5'-phospho-DNA)-tyrosine intermediate in catalysis. The short motif at glutamine 534–glycine 540 is the GyrA-box element. The interval arginine 825–glutamate 857 is disordered. Residues glutamate 828–alanine 840 are compositionally biased toward acidic residues.

The protein belongs to the type II topoisomerase GyrA/ParC subunit family. As to quaternary structure, heterotetramer, composed of two GyrA and two GyrB chains. In the heterotetramer, GyrA contains the active site tyrosine that forms a transient covalent intermediate with DNA, while GyrB binds cofactors and catalyzes ATP hydrolysis.

The protein localises to the cytoplasm. The catalysed reaction is ATP-dependent breakage, passage and rejoining of double-stranded DNA.. Its function is as follows. A type II topoisomerase that negatively supercoils closed circular double-stranded (ds) DNA in an ATP-dependent manner to modulate DNA topology and maintain chromosomes in an underwound state. Negative supercoiling favors strand separation, and DNA replication, transcription, recombination and repair, all of which involve strand separation. Also able to catalyze the interconversion of other topological isomers of dsDNA rings, including catenanes and knotted rings. Type II topoisomerases break and join 2 DNA strands simultaneously in an ATP-dependent manner. The sequence is that of DNA gyrase subunit A from Streptomyces coelicolor (strain ATCC BAA-471 / A3(2) / M145).